The sequence spans 323 residues: Aspartate carbamoyltransferase catalytic subunit (323 aa).

Residues Arg-55 and Thr-56 each contribute to the carbamoyl phosphate site. Lys-83 serves as a coordination point for L-aspartate. Arg-105, His-133, and Gln-136 together coordinate carbamoyl phosphate. The L-aspartate site is built by Arg-166 and Arg-220. Carbamoyl phosphate is bound by residues Gly-261 and Pro-262.

The protein belongs to the aspartate/ornithine carbamoyltransferase superfamily. ATCase family. Heterododecamer (2C3:3R2) of six catalytic PyrB chains organized as two trimers (C3), and six regulatory PyrI chains organized as three dimers (R2).

It carries out the reaction carbamoyl phosphate + L-aspartate = N-carbamoyl-L-aspartate + phosphate + H(+). Its pathway is pyrimidine metabolism; UMP biosynthesis via de novo pathway; (S)-dihydroorotate from bicarbonate: step 2/3. In terms of biological role, catalyzes the condensation of carbamoyl phosphate and aspartate to form carbamoyl aspartate and inorganic phosphate, the committed step in the de novo pyrimidine nucleotide biosynthesis pathway. The sequence is that of Aspartate carbamoyltransferase catalytic subunit from Acidothermus cellulolyticus (strain ATCC 43068 / DSM 8971 / 11B).